The following is a 55-amino-acid chain: Seripauperin-7 (55 aa).

An N-terminal signal peptide occupies residues 1–20 (MVKLTSIAAGVAAIAAGASA).

Belongs to the SRP1/TIP1 family. Seripauperin subfamily.

The protein is Seripauperin-7 (PAU7) of Saccharomyces cerevisiae (strain ATCC 204508 / S288c) (Baker's yeast).